Here is a 1690-residue protein sequence, read N- to C-terminus: rRNA biogenesis protein rrp5 (1690 aa).

Disordered stretches follow at residues 1-42 (MAGN…GASS) and 59-90 (FMES…ELDN). Positions 11–32 (ASEGSDSQGNERISSLSANEAT) are enriched in polar residues. The span at 72–83 (KTRPKKKGSKKS) shows a compositional bias: basic residues. 13 consecutive S1 motif domains span residues 109–209 (GSLI…LSLK), 226–289 (GSMI…LTAT), 306–376 (GDYI…VSFL), 398–473 (GFIV…LSFQ), 490–559 (GQFV…LTLK), 579–648 (GTQT…VGCR), 666–739 (GSVL…LSLK), 761–830 (GIKY…MSFK), 866–942 (GKIT…ISHR), 973–1044 (GDEV…IGPL), 1053–1122 (GSRL…LSAR), 1147–1216 (GDIC…MSLK), and 1236–1307 (GSNL…LGLK). Residues 1313–1424 (SDSDISMSDN…EEKDLDEIPS (112 aa)) are disordered. 3 stretches are compositionally biased toward acidic residues: residues 1348 to 1367 (QSEE…EEEP), 1390 to 1400 (DTEDSEDEEDE), and 1412 to 1421 (FDDEEKDLDE). At Thr1391 the chain carries Phosphothreonine. The residue at position 1394 (Ser1394) is a Phosphoserine. 3 HAT repeats span residues 1420–1452 (DEIP…YHLN), 1526–1558 (GKVD…FLLN), and 1596–1628 (GDPE…MEMK). Residues Ser1684 and Ser1686 each carry the phosphoserine modification.

Component of the ribosomal small subunit (SSU) processome.

Its subcellular location is the nucleus. The protein resides in the nucleolus. In terms of biological role, involved in the biogenesis of rRNA. Required for the formation of 18S and 5.8S rRNA. The chain is rRNA biogenesis protein rrp5 from Schizosaccharomyces pombe (strain 972 / ATCC 24843) (Fission yeast).